Consider the following 1048-residue polypeptide: Anguibactin system regulator (1048 aa).

A Carrier domain is found at 965-1039 (PIITASEDRV…AFAIIMDRCR (75 aa)).

This sequence belongs to the ATP-dependent AMP-binding enzyme family.

Its pathway is siderophore biosynthesis; anguibactin biosynthesis. Functionally, bifunctional protein that plays an essential role in virulence. Plays a role in both the production of the siderophore anguibactin and the regulation of iron transport genes. The chain is Anguibactin system regulator (angR) from Vibrio anguillarum (Listonella anguillarum).